A 173-amino-acid polypeptide reads, in one-letter code: Calcium-binding protein 5 (173 aa).

4 EF-hand domains span residues 28–63 (DEIE…MGYM), 82–99 (GRVD…KLLA), 105–140 (IGVQ…LLGD), and 142–173 (LTSQ…MMSR). Positions 41, 43, 45, and 52 each coordinate Ca(2+). Ca(2+)-binding residues include Asp118, Asn120, Asp122, Glu124, Glu129, Asp155, Asn157, Asp159, Thr161, and Glu166.

Interacts with CACNA1C (via C-terminal CDB motif) in a calcium-dependent manner. Interacts with STXBP1. Interacts with MYO6. Expressed in the retina (at protein level).

It is found in the cytoplasm. Inhibits calcium-dependent inactivation of L-type calcium channel and shifts voltage dependence of activation to more depolarized membrane potentials. Involved in the transmission of light signals. May positively regulate neurotransmitter vesicle endocytosis and exocytosis in a salt-dependent manner. May play a role in the extension and network organization of neurites. This chain is Calcium-binding protein 5 (CABP5), found in Bos taurus (Bovine).